The sequence spans 55 residues: ATP synthase F(0) complex subunit 8 (55 aa).

Residues L4–I24 traverse the membrane as a helical segment. The segment at E36–H55 is disordered.

Belongs to the ATPase protein 8 family. As to quaternary structure, component of the ATP synthase complex composed at least of ATP5F1A/subunit alpha, ATP5F1B/subunit beta, ATP5MC1/subunit c (homooctomer), MT-ATP6/subunit a, MT-ATP8/subunit 8, ATP5ME/subunit e, ATP5MF/subunit f, ATP5MG/subunit g, ATP5MK/subunit k, ATP5MJ/subunit j, ATP5F1C/subunit gamma, ATP5F1D/subunit delta, ATP5F1E/subunit epsilon, ATP5PF/subunit F6, ATP5PB/subunit b, ATP5PD/subunit d, ATP5PO/subunit OSCP. ATP synthase complex consists of a soluble F(1) head domain (subunits alpha(3) and beta(3)) - the catalytic core - and a membrane F(0) domain - the membrane proton channel (subunits c, a, 8, e, f, g, k and j). These two domains are linked by a central stalk (subunits gamma, delta, and epsilon) rotating inside the F1 region and a stationary peripheral stalk (subunits F6, b, d, and OSCP).

The protein localises to the mitochondrion membrane. Subunit 8, of the mitochondrial membrane ATP synthase complex (F(1)F(0) ATP synthase or Complex V) that produces ATP from ADP in the presence of a proton gradient across the membrane which is generated by electron transport complexes of the respiratory chain. ATP synthase complex consist of a soluble F(1) head domain - the catalytic core - and a membrane F(1) domain - the membrane proton channel. These two domains are linked by a central stalk rotating inside the F(1) region and a stationary peripheral stalk. During catalysis, ATP synthesis in the catalytic domain of F(1) is coupled via a rotary mechanism of the central stalk subunits to proton translocation. In vivo, can only synthesize ATP although its ATP hydrolase activity can be activated artificially in vitro. Part of the complex F(0) domain. The sequence is that of ATP synthase F(0) complex subunit 8 from Salvelinus alpinus (Arctic char).